Here is a 206-residue protein sequence, read N- to C-terminus: Large ribosomal subunit protein uL4 (206 aa).

The disordered stretch occupies residues lysine 62–glycine 85.

The protein belongs to the universal ribosomal protein uL4 family. Part of the 50S ribosomal subunit.

In terms of biological role, one of the primary rRNA binding proteins, this protein initially binds near the 5'-end of the 23S rRNA. It is important during the early stages of 50S assembly. It makes multiple contacts with different domains of the 23S rRNA in the assembled 50S subunit and ribosome. Forms part of the polypeptide exit tunnel. This chain is Large ribosomal subunit protein uL4, found in Rhodospirillum centenum (strain ATCC 51521 / SW).